We begin with the raw amino-acid sequence, 352 residues long: Guanidino acid hydrolase, mitochondrial (352 aa).

The N-terminal 35 residues, 1–35 (MLRLLASGCARGPGPGVGARPAAGLFHPGRRQSRQ), are a transit peptide targeting the mitochondrion. The disordered stretch occupies residues 11-49 (RGPGPGVGARPAAGLFHPGRRQSRQASDAPRNQPPSPEF). Residues H162, D185, H187, and D189 each coordinate Mn(2+). K193 is modified (N6-acetyllysine). K217 carries the post-translational modification N6-acetyllysine; alternate. Position 217 is an N6-succinyllysine; alternate (K217). Mn(2+) contacts are provided by D276 and D278.

It belongs to the ureohydrolase superfamily. Arginase family. The cofactor is Mn(2+). Highly expressed in liver and kidney. Also found in skeletal muscle, fetal liver, brain, testis, skin and the gastrointestinal tract. Within brain, expression is higher in the cerebral cortex with lower levels in the medulla and spinal cord.

The protein resides in the mitochondrion. It catalyses the reaction 3-guanidinopropanoate + H2O = urea + beta-alanine. It carries out the reaction 4-guanidinobutanoate + H2O = urea + 4-aminobutanoate. The enzyme catalyses taurocyamine + H2O = urea + taurine. The catalysed reaction is L-arginine + H2O = urea + L-ornithine. It participates in nitrogen metabolism; urea cycle; L-ornithine and urea from L-arginine: step 1/1. Hydrolyzes linear guanidino acids to form urea and the corresponding amines. Displays specificity for substrates having a negatively charged head group and short chains including taurocyamine, guanidino propanoic and butanoic acids. May protect cells by detoxifying potentially harmful amounts of guanidino acids. Metabolizes L-arginine with low efficiency. In Homo sapiens (Human), this protein is Guanidino acid hydrolase, mitochondrial (AGMAT).